Consider the following 794-residue polypeptide: Histone-lysine N-methyltransferase, H3 lysine-9 specific SUVH5 (794 aa).

2 disordered regions span residues 187–210 (VGRDLSPNMGSKFSKNGKTAKRSI) and 254–276 (SPVKPSEKRNGDYGEGSMRKNSE). Over residues 194 to 203 (NMGSKFSKNG) the composition is skewed to polar residues. A compositionally biased stretch (basic and acidic residues) spans 258–276 (PSEKRNGDYGEGSMRKNSE). In terms of domain architecture, YDG spans 365–515 (GTVPGVEVGD…KLVFKFKLRR (151 aa)). The Pre-SET domain maps to 585–644 (KSCGCTNGCSKSKNCACIVKNGGKIPYYDGAIVEIKPLVYECGPHCKCPPSCNMRVSQHG). One can recognise an SET domain in the interval 647 to 764 (IKLEIFKTES…PLQELSYDYN (118 aa)). Residues 778-794 (KKKFCYCGSAECSGRLY) form the Post-SET domain.

Belongs to the class V-like SAM-binding methyltransferase superfamily. Histone-lysine methyltransferase family. Suvar3-9 subfamily. In terms of tissue distribution, expressed in leaves stems and flowers.

The protein resides in the nucleus. Its subcellular location is the chromosome. It is found in the centromere. It catalyses the reaction N(6)-methyl-L-lysyl(9)-[histone H3] + S-adenosyl-L-methionine = N(6),N(6)-dimethyl-L-lysyl(9)-[histone H3] + S-adenosyl-L-homocysteine + H(+). It carries out the reaction L-lysyl(9)-[histone H3] + S-adenosyl-L-methionine = N(6)-methyl-L-lysyl(9)-[histone H3] + S-adenosyl-L-homocysteine + H(+). Its function is as follows. Histone methyltransferase. Methylates 'Lys-9' of histone H3. H3 'Lys-9' methylation represents a specific tag for epigenetic transcriptional repression. This chain is Histone-lysine N-methyltransferase, H3 lysine-9 specific SUVH5 (SUVH5), found in Arabidopsis thaliana (Mouse-ear cress).